Reading from the N-terminus, the 208-residue chain is MEDKTVELQFITHFTDTYSYYDSARMALEGGCRWIQLRMKDTPVDEVEREAIRLQGLCKDYGATFVIDDHVELVKKIHADGVHLGKKDMPVAEARGILGKEFIIGGTANTFDDVKMHYKAGADYIGCGPFRFTTTKKDLSPVLGLEGYRSIILQMKEANIHLPIVAIGGITLEDIPSIMETGITGIALSGTILRAKDPVAETKRIMNL.

4-amino-2-methyl-5-(diphosphooxymethyl)pyrimidine contacts are provided by residues 36 to 40 and aspartate 68; that span reads QLRMK. Residues aspartate 69 and aspartate 88 each contribute to the Mg(2+) site. Threonine 107 contributes to the 4-amino-2-methyl-5-(diphosphooxymethyl)pyrimidine binding site. A 2-[(2R,5Z)-2-carboxy-4-methylthiazol-5(2H)-ylidene]ethyl phosphate-binding site is contributed by 133 to 135; the sequence is TTT. Residue lysine 136 coordinates 4-amino-2-methyl-5-(diphosphooxymethyl)pyrimidine. Glycine 169 contacts 2-[(2R,5Z)-2-carboxy-4-methylthiazol-5(2H)-ylidene]ethyl phosphate.

This sequence belongs to the thiamine-phosphate synthase family. The cofactor is Mg(2+).

The catalysed reaction is 2-[(2R,5Z)-2-carboxy-4-methylthiazol-5(2H)-ylidene]ethyl phosphate + 4-amino-2-methyl-5-(diphosphooxymethyl)pyrimidine + 2 H(+) = thiamine phosphate + CO2 + diphosphate. It catalyses the reaction 2-(2-carboxy-4-methylthiazol-5-yl)ethyl phosphate + 4-amino-2-methyl-5-(diphosphooxymethyl)pyrimidine + 2 H(+) = thiamine phosphate + CO2 + diphosphate. The enzyme catalyses 4-methyl-5-(2-phosphooxyethyl)-thiazole + 4-amino-2-methyl-5-(diphosphooxymethyl)pyrimidine + H(+) = thiamine phosphate + diphosphate. It functions in the pathway cofactor biosynthesis; thiamine diphosphate biosynthesis; thiamine phosphate from 4-amino-2-methyl-5-diphosphomethylpyrimidine and 4-methyl-5-(2-phosphoethyl)-thiazole: step 1/1. Condenses 4-methyl-5-(beta-hydroxyethyl)thiazole monophosphate (THZ-P) and 2-methyl-4-amino-5-hydroxymethyl pyrimidine pyrophosphate (HMP-PP) to form thiamine monophosphate (TMP). This chain is Thiamine-phosphate synthase, found in Phocaeicola vulgatus (strain ATCC 8482 / DSM 1447 / JCM 5826 / CCUG 4940 / NBRC 14291 / NCTC 11154) (Bacteroides vulgatus).